Here is a 28-residue protein sequence, read N- to C-terminus: Toxin a (28 aa).

Positions 3–28 (VPGNYPLDSYGNCYPCTILGDNQYCI) constitute an LCN-type CS-alpha/beta domain.

The protein belongs to the long (3 C-C) scorpion toxin superfamily. Expressed by the venom gland.

Its subcellular location is the secreted. Its function is as follows. Binds to sodium channels (Nav) and affects the channel activation process. This Androctonus crassicauda (Arabian fat-tailed scorpion) protein is Toxin a.